The following is a 456-amino-acid chain: F-box/FBD/LRR-repeat protein At1g13780 (456 aa).

One can recognise an F-box domain in the interval 9-55 (FDRISELPESLISQILLHLPTKASVKTSVLSTRWKNLWLNVPGLDLN). LRR repeat units follow at residues 197 to 220 (LEEL…SLKR), 243 to 266 (APGL…NLTS), 302 to 325 (ISSV…SKVG), and 355 to 379 (FPNL…ELVN). In terms of domain architecture, FBD spans 372–424 (MEKFELVNVPRCFVSTLEHVEIKGLFDWGEQDMKIASYFLENSAVLKKLILSF).

The protein is F-box/FBD/LRR-repeat protein At1g13780 of Arabidopsis thaliana (Mouse-ear cress).